Here is a 197-residue protein sequence, read N- to C-terminus: Protein GrpE (197 aa).

A compositionally biased stretch (basic and acidic residues) spans 1 to 12; that stretch reads MTDSDGKTDKSG. Positions 1–35 are disordered; it reads MTDSDGKTDKSGEPAAEVEPVVSKPYVMPDDPEDD.

It belongs to the GrpE family. In terms of assembly, homodimer.

The protein resides in the cytoplasm. In terms of biological role, participates actively in the response to hyperosmotic and heat shock by preventing the aggregation of stress-denatured proteins, in association with DnaK and GrpE. It is the nucleotide exchange factor for DnaK and may function as a thermosensor. Unfolded proteins bind initially to DnaJ; upon interaction with the DnaJ-bound protein, DnaK hydrolyzes its bound ATP, resulting in the formation of a stable complex. GrpE releases ADP from DnaK; ATP binding to DnaK triggers the release of the substrate protein, thus completing the reaction cycle. Several rounds of ATP-dependent interactions between DnaJ, DnaK and GrpE are required for fully efficient folding. This is Protein GrpE from Nitrobacter winogradskyi (strain ATCC 25391 / DSM 10237 / CIP 104748 / NCIMB 11846 / Nb-255).